A 170-amino-acid polypeptide reads, in one-letter code: VIP peptides (170 aa).

The N-terminal stretch at 1–21 is a signal peptide; it reads MEARSKPQFLAFLILFSVLFS. A propeptide spanning residues 22 to 79 is cleaved from the precursor; the sequence is QSLAWPLFGPPSVVRLDDRMPFEGAGDPDQVSLKADSDILQNPLAENGTPYYDVSRNA. Serine 76 carries the phosphoserine modification. Isoleucine 107 carries the post-translational modification Isoleucine amide. An N-linked (GlcNAc...) asparagine glycan is attached at asparagine 133. Asparagine 152 bears the Asparagine amide mark. Positions 156–170 are excised as a propeptide; sequence SSEGDSADFLEELEK.

Belongs to the glucagon family.

The protein resides in the secreted. Functionally, VIP is a neuropeptide involved in a diverse array of physiological processes through activating the PACAP subfamily of class B1 G protein-coupled receptors: VIP receptor 1 (VPR1) and VIP receptor 2 (VPR2). Abundantly expressed throughout the CNS and peripheral nervous systems where they primarily exert neuroprotective and immune modulatory roles. Also causes vasodilation, lowers arterial blood pressure, stimulates myocardial contractility, increases glycogenolysis and relaxes the smooth muscle of trachea, stomach and gall bladder. Its function is as follows. PHM-27 and PHV-42 are two bioactive forms from proteolysis of the same precursor protein, that cause vasodilation. PHM-27 is a potent agonist of the calcitonin receptor CALCR, with similar efficacy as calcitonin. This Mus musculus (Mouse) protein is VIP peptides (Vip).